Here is a 476-residue protein sequence, read N- to C-terminus: Lactate utilization protein B (476 aa).

2 consecutive 4Fe-4S ferredoxin-type domains span residues 304–334 (GGEFQPILQCIRCAACVNACPVYRHVGGHTY) and 353–382 (YDDFKELPYASTLCGACTDACPVKIPLHQL). [4Fe-4S] cluster-binding residues include Cys-313, Cys-316, Cys-319, Cys-323, Cys-366, Cys-369, and Cys-373. A disordered region spans residues 452–476 (RDFPAPNKNSFRNWMKHRTKGDEES).

Belongs to the LutB/YkgF family.

In terms of biological role, is involved in L-lactate degradation and allows cells to grow with lactate as the sole carbon source. Has probably a role as an electron transporter during oxidation of L-lactate. The sequence is that of Lactate utilization protein B from Lysinibacillus sphaericus (strain C3-41).